The chain runs to 159 residues: Phosphopantetheine adenylyltransferase (159 aa).

Thr-10 is a binding site for substrate. ATP is bound by residues 10-11 and His-18; that span reads TF. Positions 42, 74, and 88 each coordinate substrate. ATP is bound by residues 89-91, Glu-99, and 124-130; these read GLR and WSFISSS.

It belongs to the bacterial CoaD family. In terms of assembly, homohexamer. It depends on Mg(2+) as a cofactor.

The protein localises to the cytoplasm. The catalysed reaction is (R)-4'-phosphopantetheine + ATP + H(+) = 3'-dephospho-CoA + diphosphate. It participates in cofactor biosynthesis; coenzyme A biosynthesis; CoA from (R)-pantothenate: step 4/5. Its function is as follows. Reversibly transfers an adenylyl group from ATP to 4'-phosphopantetheine, yielding dephospho-CoA (dPCoA) and pyrophosphate. This Salmonella paratyphi A (strain ATCC 9150 / SARB42) protein is Phosphopantetheine adenylyltransferase.